The primary structure comprises 152 residues: Transcriptional regulator MraZ (152 aa).

2 consecutive SpoVT-AbrB domains span residues 5-52 and 81-124; these read ASAI…PIHE and AHEV…DEQA.

This sequence belongs to the MraZ family. In terms of assembly, forms oligomers.

It is found in the cytoplasm. The protein localises to the nucleoid. This Shewanella sp. (strain ANA-3) protein is Transcriptional regulator MraZ.